The following is a 376-amino-acid chain: Chaperone protein DnaJ (376 aa).

Residues 5–70 form the J domain; that stretch reads DFYDVLGVSK…EKKQNYDNFG (66 aa). A CR-type zinc finger spans residues 137–215; the sequence is GKKQDIKFST…CNGQGNKQAS (79 aa). Zn(2+) contacts are provided by Cys150, Cys153, Cys167, Cys170, Cys189, Cys192, Cys203, and Cys206. CXXCXGXG motif repeat units lie at residues 150–157, 167–174, 189–196, and 203–210; these read CNTCNGNG, CTVCGGNG, CPQCAGSG, and CTDCNGQG.

The protein belongs to the DnaJ family. As to quaternary structure, homodimer. Requires Zn(2+) as cofactor.

The protein resides in the cytoplasm. Participates actively in the response to hyperosmotic and heat shock by preventing the aggregation of stress-denatured proteins and by disaggregating proteins, also in an autonomous, DnaK-independent fashion. Unfolded proteins bind initially to DnaJ; upon interaction with the DnaJ-bound protein, DnaK hydrolyzes its bound ATP, resulting in the formation of a stable complex. GrpE releases ADP from DnaK; ATP binding to DnaK triggers the release of the substrate protein, thus completing the reaction cycle. Several rounds of ATP-dependent interactions between DnaJ, DnaK and GrpE are required for fully efficient folding. Also involved, together with DnaK and GrpE, in the DNA replication of plasmids through activation of initiation proteins. The chain is Chaperone protein DnaJ from Pelagibacter ubique (strain HTCC1062).